The sequence spans 234 residues: Phosphoglycolate phosphatase (234 aa).

Residue Asp9 is the Nucleophile of the active site. Positions 9 and 11 each coordinate Mg(2+). Lys162 contributes to the substrate binding site. Mg(2+)-binding residues include Asp185 and Asp189.

This sequence belongs to the archaeal SPP-like hydrolase family. Requires Mg(2+) as cofactor.

The enzyme catalyses 2-phosphoglycolate + H2O = glycolate + phosphate. Functionally, catalyzes the dephosphorylation of 2-phosphoglycolate. The polypeptide is Phosphoglycolate phosphatase (Methanobrevibacter smithii (strain ATCC 35061 / DSM 861 / OCM 144 / PS)).